The chain runs to 391 residues: Formate-dependent phosphoribosylglycinamide formyltransferase (391 aa).

N(1)-(5-phospho-beta-D-ribosyl)glycinamide is bound by residues 20–21 (EL) and glutamate 80. ATP-binding positions include arginine 112, lysine 153, 158-163 (SSGKGQ), 193-196 (EGFV), and glutamate 201. The 190-residue stretch at 117–306 (RLAAETLGLP…EFALHVRAIL (190 aa)) folds into the ATP-grasp domain. Glutamate 265 and glutamate 277 together coordinate Mg(2+). N(1)-(5-phospho-beta-D-ribosyl)glycinamide-binding positions include aspartate 284, lysine 354, and 361–362 (RR).

Belongs to the PurK/PurT family. Homodimer.

It carries out the reaction N(1)-(5-phospho-beta-D-ribosyl)glycinamide + formate + ATP = N(2)-formyl-N(1)-(5-phospho-beta-D-ribosyl)glycinamide + ADP + phosphate + H(+). The protein operates within purine metabolism; IMP biosynthesis via de novo pathway; N(2)-formyl-N(1)-(5-phospho-D-ribosyl)glycinamide from N(1)-(5-phospho-D-ribosyl)glycinamide (formate route): step 1/1. Involved in the de novo purine biosynthesis. Catalyzes the transfer of formate to 5-phospho-ribosyl-glycinamide (GAR), producing 5-phospho-ribosyl-N-formylglycinamide (FGAR). Formate is provided by PurU via hydrolysis of 10-formyl-tetrahydrofolate. This is Formate-dependent phosphoribosylglycinamide formyltransferase from Shewanella putrefaciens (strain CN-32 / ATCC BAA-453).